The following is a 160-amino-acid chain: Transcription elongation factor GreA (160 aa).

The stretch at 43–76 (LSENAEYDAAREQQRQLENKIGDLESKLTRATIL) forms a coiled coil.

Belongs to the GreA/GreB family.

Functionally, necessary for efficient RNA polymerase transcription elongation past template-encoded arresting sites. The arresting sites in DNA have the property of trapping a certain fraction of elongating RNA polymerases that pass through, resulting in locked ternary complexes. Cleavage of the nascent transcript by cleavage factors such as GreA or GreB allows the resumption of elongation from the new 3'terminus. GreA releases sequences of 2 to 3 nucleotides. In Chlorobium phaeobacteroides (strain BS1), this protein is Transcription elongation factor GreA.